A 188-amino-acid chain; its full sequence is ATP synthase subunit b 2 (188 aa).

A helical transmembrane segment spans residues 41 to 61; it reads FFWLVISFGFFYFFIARVIVP.

It belongs to the ATPase B chain family. As to quaternary structure, F-type ATPases have 2 components, F(1) - the catalytic core - and F(0) - the membrane proton channel. F(1) has five subunits: alpha(3), beta(3), gamma(1), delta(1), epsilon(1). F(0) has three main subunits: a(1), b(2) and c(10-14). The alpha and beta chains form an alternating ring which encloses part of the gamma chain. F(1) is attached to F(0) by a central stalk formed by the gamma and epsilon chains, while a peripheral stalk is formed by the delta and b chains.

The protein resides in the cell inner membrane. Functionally, f(1)F(0) ATP synthase produces ATP from ADP in the presence of a proton or sodium gradient. F-type ATPases consist of two structural domains, F(1) containing the extramembraneous catalytic core and F(0) containing the membrane proton channel, linked together by a central stalk and a peripheral stalk. During catalysis, ATP synthesis in the catalytic domain of F(1) is coupled via a rotary mechanism of the central stalk subunits to proton translocation. Component of the F(0) channel, it forms part of the peripheral stalk, linking F(1) to F(0). The b'-subunit is a diverged and duplicated form of b found in plants and photosynthetic bacteria. In Bartonella bacilliformis (strain ATCC 35685 / KC583 / Herrer 020/F12,63), this protein is ATP synthase subunit b 2 (atpF2).